Here is a 292-residue protein sequence, read N- to C-terminus: GTP cyclohydrolase FolE2 (292 aa).

Belongs to the GTP cyclohydrolase IV family.

It carries out the reaction GTP + H2O = 7,8-dihydroneopterin 3'-triphosphate + formate + H(+). Its pathway is cofactor biosynthesis; 7,8-dihydroneopterin triphosphate biosynthesis; 7,8-dihydroneopterin triphosphate from GTP: step 1/1. Its function is as follows. Converts GTP to 7,8-dihydroneopterin triphosphate. In Macrococcus caseolyticus (strain JCSC5402) (Macrococcoides caseolyticum), this protein is GTP cyclohydrolase FolE2.